The primary structure comprises 635 residues: 1-deoxy-D-xylulose-5-phosphate synthase (635 aa).

Residues His-78 and 119 to 121 each bind thiamine diphosphate; that span reads GHA. Asp-151 serves as a coordination point for Mg(2+). Thiamine diphosphate-binding positions include 152–153, Asn-180, and Tyr-291; that span reads GA. Asn-180 is a binding site for Mg(2+). The interval 305–325 is disordered; it reads PAFEDRGGTPVTRGSDGRPPY. Glu-374 contacts thiamine diphosphate.

The protein belongs to the transketolase family. DXPS subfamily. In terms of assembly, homodimer. Mg(2+) is required as a cofactor. The cofactor is thiamine diphosphate.

The enzyme catalyses D-glyceraldehyde 3-phosphate + pyruvate + H(+) = 1-deoxy-D-xylulose 5-phosphate + CO2. It functions in the pathway metabolic intermediate biosynthesis; 1-deoxy-D-xylulose 5-phosphate biosynthesis; 1-deoxy-D-xylulose 5-phosphate from D-glyceraldehyde 3-phosphate and pyruvate: step 1/1. In terms of biological role, catalyzes the acyloin condensation reaction between C atoms 2 and 3 of pyruvate and glyceraldehyde 3-phosphate to yield 1-deoxy-D-xylulose-5-phosphate (DXP). This Rhodopirellula baltica (strain DSM 10527 / NCIMB 13988 / SH1) protein is 1-deoxy-D-xylulose-5-phosphate synthase.